Here is a 149-residue protein sequence, read N- to C-terminus: Nucleoside diphosphate kinase (149 aa).

6 residues coordinate ATP: K9, F57, R85, T91, R102, and N112. H115 acts as the Pros-phosphohistidine intermediate in catalysis.

Belongs to the NDK family. Mg(2+) is required as a cofactor.

It localises to the cytoplasm. It catalyses the reaction a 2'-deoxyribonucleoside 5'-diphosphate + ATP = a 2'-deoxyribonucleoside 5'-triphosphate + ADP. It carries out the reaction a ribonucleoside 5'-diphosphate + ATP = a ribonucleoside 5'-triphosphate + ADP. Functionally, major role in the synthesis of nucleoside triphosphates other than ATP. The ATP gamma phosphate is transferred to the NDP beta phosphate via a ping-pong mechanism, using a phosphorylated active-site intermediate. The polypeptide is Nucleoside diphosphate kinase (Methanococcoides burtonii (strain DSM 6242 / NBRC 107633 / OCM 468 / ACE-M)).